The sequence spans 623 residues: Arginine--tRNA ligase (623 aa).

The 'HIGH' region motif lies at 116–126; sequence ANPIHPLHVGH.

This sequence belongs to the class-I aminoacyl-tRNA synthetase family.

It localises to the cytoplasm. The enzyme catalyses tRNA(Arg) + L-arginine + ATP = L-arginyl-tRNA(Arg) + AMP + diphosphate. The polypeptide is Arginine--tRNA ligase (Sulfurisphaera tokodaii (strain DSM 16993 / JCM 10545 / NBRC 100140 / 7) (Sulfolobus tokodaii)).